The chain runs to 277 residues: Diaminopimelate epimerase (277 aa).

Substrate contacts are provided by asparagine 13, glutamine 46, and asparagine 66. Residue cysteine 75 is the Proton donor of the active site. Residues 76-77 (GN), asparagine 160, asparagine 193, and 211-212 (ER) contribute to the substrate site. Cysteine 220 acts as the Proton acceptor in catalysis. 221–222 (GS) provides a ligand contact to substrate.

It belongs to the diaminopimelate epimerase family. Homodimer.

It localises to the cytoplasm. It carries out the reaction (2S,6S)-2,6-diaminopimelate = meso-2,6-diaminopimelate. It participates in amino-acid biosynthesis; L-lysine biosynthesis via DAP pathway; DL-2,6-diaminopimelate from LL-2,6-diaminopimelate: step 1/1. Catalyzes the stereoinversion of LL-2,6-diaminopimelate (L,L-DAP) to meso-diaminopimelate (meso-DAP), a precursor of L-lysine and an essential component of the bacterial peptidoglycan. The chain is Diaminopimelate epimerase from Legionella pneumophila (strain Paris).